The chain runs to 175 residues: Small ribosomal subunit protein mS38 (175 aa).

This sequence belongs to the mitochondrion-specific ribosomal protein mS38 family. Component of the mitochondrial small ribosomal subunit (mt-SSU). Mature yeast 74S mitochondrial ribosomes consist of a small (37S) and a large (54S) subunit. The 37S small subunit contains a 15S ribosomal RNA (15S mt-rRNA) and at least 32 different proteins. The 54S large subunit contains a 21S rRNA (21S mt-rRNA) and at least 45 different proteins.

The protein localises to the mitochondrion. Its subcellular location is the mitochondrion inner membrane. In terms of biological role, component of the mitochondrial ribosome (mitoribosome), a dedicated translation machinery responsible for the synthesis of mitochondrial genome-encoded proteins, including at least some of the essential transmembrane subunits of the mitochondrial respiratory chain. The mitoribosomes are attached to the mitochondrial inner membrane and translation products are cotranslationally integrated into the membrane. mS38 is also involved in the splicing of the COX1 mRNA. The chain is Small ribosomal subunit protein mS38 (cox24) from Schizosaccharomyces pombe (strain 972 / ATCC 24843) (Fission yeast).